We begin with the raw amino-acid sequence, 197 residues long: MYAYLKGIITKITAKYIVLETNGIGYILHVANPYAYSGQVNQEDQIYVHQVVREDAHLLYGFRSEDEKKLFLSLISVSGIGPVSALAIIAADDNAGLVQAIETKNITYLTKFPKIGKKTAQQMVLDLEGKVVVAGDDLPAKIAVQASAENQELEEAMEAMLALGYKATELKKIKKFFEGTTDTAENYIKSALKMLVK.

Residues M1–R63 form a domain I region. Residues S64–I142 form a domain II region. A flexible linker region spans residues A143 to S147. The interval A148 to K197 is domain III.

The protein belongs to the RuvA family. In terms of assembly, homotetramer. Forms an RuvA(8)-RuvB(12)-Holliday junction (HJ) complex. HJ DNA is sandwiched between 2 RuvA tetramers; dsDNA enters through RuvA and exits via RuvB. An RuvB hexamer assembles on each DNA strand where it exits the tetramer. Each RuvB hexamer is contacted by two RuvA subunits (via domain III) on 2 adjacent RuvB subunits; this complex drives branch migration. In the full resolvosome a probable DNA-RuvA(4)-RuvB(12)-RuvC(2) complex forms which resolves the HJ.

The protein localises to the cytoplasm. Functionally, the RuvA-RuvB-RuvC complex processes Holliday junction (HJ) DNA during genetic recombination and DNA repair, while the RuvA-RuvB complex plays an important role in the rescue of blocked DNA replication forks via replication fork reversal (RFR). RuvA specifically binds to HJ cruciform DNA, conferring on it an open structure. The RuvB hexamer acts as an ATP-dependent pump, pulling dsDNA into and through the RuvAB complex. HJ branch migration allows RuvC to scan DNA until it finds its consensus sequence, where it cleaves and resolves the cruciform DNA. This Streptococcus pneumoniae (strain Taiwan19F-14) protein is Holliday junction branch migration complex subunit RuvA.